The primary structure comprises 177 residues: Ribosome maturation factor RimM (177 aa).

One can recognise a PRC barrel domain in the interval 92–166; the sequence is EDTFYHADLM…RIVVVPDTNP (75 aa).

The protein belongs to the RimM family. Binds ribosomal protein uS19.

It localises to the cytoplasm. An accessory protein needed during the final step in the assembly of 30S ribosomal subunit, possibly for assembly of the head region. Essential for efficient processing of 16S rRNA. May be needed both before and after RbfA during the maturation of 16S rRNA. It has affinity for free ribosomal 30S subunits but not for 70S ribosomes. This is Ribosome maturation factor RimM from Azorhizobium caulinodans (strain ATCC 43989 / DSM 5975 / JCM 20966 / LMG 6465 / NBRC 14845 / NCIMB 13405 / ORS 571).